The following is a 2554-amino-acid chain: DnaJ homolog subfamily C GRV2 (2554 aa).

Disordered regions lie at residues 746-766 and 810-833; these read DVVD…KRLL and QRRA…GVDS. The span at 815–825 shows a compositional bias: polar residues; the sequence is DSSSEASNPQA. 2 coiled-coil regions span residues 925–951 and 1518–1546; these read TRQE…EDIS and RTAS…LKRQ. The J domain occupies 1524-1606; the sequence is LNEEISNISK…AQCILYRRYG (83 aa). Disordered stretches follow at residues 1960-1994 and 2339-2366; these read IEDR…SSEG and SGEV…GQTP. A compositionally biased stretch (polar residues) spans 1966 to 1977; sequence SNDTPELQSSVA. The span at 1982-1994 shows a compositional bias: basic and acidic residues; the sequence is IEEHSDHQPSSEG. Over residues 2352–2366 the composition is skewed to polar residues; the sequence is VNESTDPSSLPGQTP.

As to expression, constitutively expressed in roots, hypocotyls, leaves (e.g. vascular tissues), stems, flowers (e.g. petals and stigmas), siliques and pollen.

It localises to the endosome membrane. Functionally, required for endosome formation, vacuolar protein sorting and determination of the embryo growth axis. Necessary for the transport of proteins into protein storage vacuoles (PSVs). Participates in vesicle trafficking from the endosome to the central vacuole. Involved in the regulation of shoot phototropism and gravitropism, probably through the positioning of specialized amyloplasts (statoliths) in endodermal cells. In Arabidopsis thaliana (Mouse-ear cress), this protein is DnaJ homolog subfamily C GRV2 (GRV2).